The following is a 430-amino-acid chain: Dihydroorotase (430 aa).

Zn(2+) is bound by residues His61 and His63. Substrate contacts are provided by residues 63–65 and Asn95; that span reads HLR. Residues Asp153, His180, and His233 each coordinate Zn(2+). Residue Asn279 coordinates substrate. A Zn(2+)-binding site is contributed by Asp306. Asp306 is a catalytic residue. Substrate is bound by residues His310 and 324–325; that span reads FG.

Belongs to the metallo-dependent hydrolases superfamily. DHOase family. Class I DHOase subfamily. Requires Zn(2+) as cofactor.

It catalyses the reaction (S)-dihydroorotate + H2O = N-carbamoyl-L-aspartate + H(+). It participates in pyrimidine metabolism; UMP biosynthesis via de novo pathway; (S)-dihydroorotate from bicarbonate: step 3/3. Functionally, catalyzes the reversible cyclization of carbamoyl aspartate to dihydroorotate. In Lactiplantibacillus plantarum (strain ATCC BAA-793 / NCIMB 8826 / WCFS1) (Lactobacillus plantarum), this protein is Dihydroorotase.